Consider the following 407-residue polypeptide: D-3-phosphoglycerate dehydrogenase (407 aa).

NAD(+) contacts are provided by residues 161–162 (HI), D181, 238–240 (ASR), and D264. Residue R240 is part of the active site. E269 is a catalytic residue. Residue H292 is the Proton donor of the active site. 292-295 (HIGG) lines the NAD(+) pocket. The ACT domain maps to 340–407 (RILNIHNNKP…PNSIKTRVLY (68 aa)).

Belongs to the D-isomer specific 2-hydroxyacid dehydrogenase family.

It catalyses the reaction (2R)-3-phosphoglycerate + NAD(+) = 3-phosphooxypyruvate + NADH + H(+). The enzyme catalyses (R)-2-hydroxyglutarate + NAD(+) = 2-oxoglutarate + NADH + H(+). The protein operates within amino-acid biosynthesis; L-serine biosynthesis; L-serine from 3-phospho-D-glycerate: step 1/3. Catalyzes the reversible oxidation of 3-phospho-D-glycerate to 3-phosphonooxypyruvate, the first step of the phosphorylated L-serine biosynthesis pathway. Also catalyzes the reversible oxidation of 2-hydroxyglutarate to 2-oxoglutarate. This is D-3-phosphoglycerate dehydrogenase (serA) from Dictyostelium discoideum (Social amoeba).